A 1023-amino-acid chain; its full sequence is Lon protease homolog (1023 aa).

Residue 515 to 522 coordinates ATP; the sequence is GPPGVGKT. The 194-residue stretch at 810-1003 folds into the Lon proteolytic domain; that stretch reads TNMIGVINGL…IEIITDPNVI (194 aa). The active site involves S906.

The protein belongs to the peptidase S16 family.

This is Lon protease homolog from Acanthamoeba polyphaga (Amoeba).